We begin with the raw amino-acid sequence, 281 residues long: Digeranylgeranylglyceryl phosphate synthase (281 aa).

Helical transmembrane passes span 88 to 108, 132 to 152, 200 to 220, 225 to 245, and 261 to 281; these read IALSLFGIALSIFLGFIEFLI, ALVSLGVAFTLIFGSLAAGNL, GILVFLLSLATVVLTILPVIF, IIYLSLSVIISLPILMLASAI, and LIKVSMFLGLLGMLLDPFRVV.

The protein belongs to the UbiA prenyltransferase family. DGGGP synthase subfamily. Mg(2+) is required as a cofactor.

It is found in the cell membrane. It carries out the reaction sn-3-O-(geranylgeranyl)glycerol 1-phosphate + (2E,6E,10E)-geranylgeranyl diphosphate = 2,3-bis-O-(geranylgeranyl)-sn-glycerol 1-phosphate + diphosphate. The protein operates within membrane lipid metabolism; glycerophospholipid metabolism. Its function is as follows. Prenyltransferase that catalyzes the transfer of the geranylgeranyl moiety of geranylgeranyl diphosphate (GGPP) to the C2 hydroxyl of (S)-3-O-geranylgeranylglyceryl phosphate (GGGP). This reaction is the second ether-bond-formation step in the biosynthesis of archaeal membrane lipids. The polypeptide is Digeranylgeranylglyceryl phosphate synthase (Korarchaeum cryptofilum (strain OPF8)).